Here is a 282-residue protein sequence, read N- to C-terminus: tRNA pseudouridine synthase A (282 aa).

The active-site Nucleophile is the Asp53. Tyr119 contributes to the substrate binding site.

The protein belongs to the tRNA pseudouridine synthase TruA family. In terms of assembly, homodimer.

The enzyme catalyses uridine(38/39/40) in tRNA = pseudouridine(38/39/40) in tRNA. In terms of biological role, formation of pseudouridine at positions 38, 39 and 40 in the anticodon stem and loop of transfer RNAs. The polypeptide is tRNA pseudouridine synthase A (Corynebacterium efficiens (strain DSM 44549 / YS-314 / AJ 12310 / JCM 11189 / NBRC 100395)).